The sequence spans 242 residues: Large ribosomal subunit protein uL3 (242 aa).

The residue at position 151 (Gln151) is an N5-methylglutamine.

Belongs to the universal ribosomal protein uL3 family. Part of the 50S ribosomal subunit. Forms a cluster with proteins L14 and L19. In terms of processing, methylated by PrmB.

In terms of biological role, one of the primary rRNA binding proteins, it binds directly near the 3'-end of the 23S rRNA, where it nucleates assembly of the 50S subunit. The chain is Large ribosomal subunit protein uL3 from Zymomonas mobilis subsp. mobilis (strain ATCC 31821 / ZM4 / CP4).